We begin with the raw amino-acid sequence, 90 residues long: YcgL domain-containing protein plu2139 (90 aa).

Residues 1–85 enclose the YcgL domain; that stretch reads MICAIYSSPK…PVENLMNAHL (85 aa).

In Photorhabdus laumondii subsp. laumondii (strain DSM 15139 / CIP 105565 / TT01) (Photorhabdus luminescens subsp. laumondii), this protein is YcgL domain-containing protein plu2139.